A 330-amino-acid polypeptide reads, in one-letter code: MKIAIDAMGGDHAPKAVVLGAMKAIKEYSDLHITLVGKEEEIRQYLTSEERITILHTDEKIESTDEPVRAVRRKKQASMVLAAQQVKDGVADACISAGSTGALMAAGLFVVGRMEGIERPALSPTMPTVDGEGFVMLDVGANVDAKPIHLYQYAVMGSVYAEKVRGIKNPRVGLLNVGTEGGKGNELSKQVFAMLKDAPINFVGNVESRDLLQGVADVVVCDGFTGNVALKSLEGTALALFSMLKEQLMSSFTSKLAAAVLKPKLMVLKDKMDYSEYGGAALFGLKAPVIKAHGSSNDQSIFSAIRQTREMVAKEVIPTISSVMEKEPLQ.

Belongs to the PlsX family. In terms of assembly, homodimer. Probably interacts with PlsY.

The protein localises to the cytoplasm. It catalyses the reaction a fatty acyl-[ACP] + phosphate = an acyl phosphate + holo-[ACP]. It functions in the pathway lipid metabolism; phospholipid metabolism. Its function is as follows. Catalyzes the reversible formation of acyl-phosphate (acyl-PO(4)) from acyl-[acyl-carrier-protein] (acyl-ACP). This enzyme utilizes acyl-ACP as fatty acyl donor, but not acyl-CoA. In Bacillus anthracis (strain A0248), this protein is Phosphate acyltransferase.